The sequence spans 864 residues: Probable M1 family aminopeptidase 1 (864 aa).

Residues E149 and 289 to 293 contribute to the substrate site; that span reads GAMEN. H325 lines the Zn(2+) pocket. The active-site Proton acceptor is E326. The Zn(2+) site is built by H329 and E348.

It belongs to the peptidase M1 family. Requires Zn(2+) as cofactor.

This Encephalitozoon cuniculi (strain GB-M1) (Microsporidian parasite) protein is Probable M1 family aminopeptidase 1.